Here is a 189-residue protein sequence, read N- to C-terminus: Apolipophorin-3 (189 aa).

The signal sequence occupies residues 1–18 (MAAKFVVVLAACVALSHS). Residues 19–23 (AMVRR) constitute a propeptide that is removed on maturation.

This sequence belongs to the insect apolipophorin-3 family. Equilibrium between a soluble monomer and a bound lipoprotein form. Apolipophorin-3 associates with lipophorin during lipid loading until each particle contains 9 or 14 molecules of apolipophorin-3. As to expression, hemolymph.

It localises to the secreted. Assists in the loading of diacylglycerol, generated from triacylglycerol stores in the fat body through the action of adipokinetic hormone, into lipophorin, the hemolymph lipoprotein. It increases the lipid carrying capacity of lipophorin by covering the expanding hydrophobic surface resulting from diacylglycerol uptake. It thus plays a critical role in the transport of lipids during flight in several species of insects. In Manduca sexta (Tobacco hawkmoth), this protein is Apolipophorin-3.